Reading from the N-terminus, the 626-residue chain is 1-deoxy-D-xylulose-5-phosphate synthase 2 (626 aa).

Thiamine diphosphate contacts are provided by residues histidine 74 and 115-117; that span reads GHA. Position 146 (aspartate 146) interacts with Mg(2+). Thiamine diphosphate is bound by residues 147-148, asparagine 175, phenylalanine 286, and glutamate 368; that span reads GS. Asparagine 175 is a binding site for Mg(2+).

The protein belongs to the transketolase family. DXPS subfamily. In terms of assembly, homodimer. Mg(2+) serves as cofactor. Requires thiamine diphosphate as cofactor.

The enzyme catalyses D-glyceraldehyde 3-phosphate + pyruvate + H(+) = 1-deoxy-D-xylulose 5-phosphate + CO2. It participates in metabolic intermediate biosynthesis; 1-deoxy-D-xylulose 5-phosphate biosynthesis; 1-deoxy-D-xylulose 5-phosphate from D-glyceraldehyde 3-phosphate and pyruvate: step 1/1. Functionally, catalyzes the acyloin condensation reaction between C atoms 2 and 3 of pyruvate and glyceraldehyde 3-phosphate to yield 1-deoxy-D-xylulose-5-phosphate (DXP). The chain is 1-deoxy-D-xylulose-5-phosphate synthase 2 from Geobacter sulfurreducens (strain ATCC 51573 / DSM 12127 / PCA).